The primary structure comprises 414 residues: Dihydroorotase (414 aa).

The Zn(2+) site is built by His57 and His59. Residues 59–61 (HLR) and Asn91 each bind substrate. Zn(2+)-binding residues include Lys135, His164, His204, and Asp272. Lys135 bears the N6-carboxylysine mark. Asp272 is an active-site residue. Substrate is bound by residues His276 and 286-287 (AG).

It belongs to the metallo-dependent hydrolases superfamily. DHOase family. Class I DHOase subfamily. Zn(2+) is required as a cofactor.

It catalyses the reaction (S)-dihydroorotate + H2O = N-carbamoyl-L-aspartate + H(+). It functions in the pathway pyrimidine metabolism; UMP biosynthesis via de novo pathway; (S)-dihydroorotate from bicarbonate: step 3/3. Catalyzes the reversible cyclization of carbamoyl aspartate to dihydroorotate. The sequence is that of Dihydroorotase from Pyrococcus furiosus (strain ATCC 43587 / DSM 3638 / JCM 8422 / Vc1).